We begin with the raw amino-acid sequence, 555 residues long: Glutamine--tRNA ligase (555 aa).

A 'HIGH' region motif is present at residues 34–44 (PEPNGYLHIGH). ATP is bound by residues 35–37 (EPN) and 41–47 (HIGHAKS). Residues Asp67 and Tyr212 each coordinate L-glutamine. Residues Thr231, 261–262 (RL), and 269–271 (MSK) each bind ATP. Positions 268-272 (IMSKR) match the 'KMSKS' region motif.

Belongs to the class-I aminoacyl-tRNA synthetase family. Monomer.

It is found in the cytoplasm. It carries out the reaction tRNA(Gln) + L-glutamine + ATP = L-glutaminyl-tRNA(Gln) + AMP + diphosphate. This Yersinia pseudotuberculosis serotype O:3 (strain YPIII) protein is Glutamine--tRNA ligase.